Consider the following 156-residue polypeptide: tRNA-specific adenosine deaminase (156 aa).

One can recognise a CMP/dCMP-type deaminase domain in the interval 2-120 (TNDIYFMTLA…GSLMNLLQQS (119 aa)). Residue His-53 coordinates Zn(2+). The active-site Proton donor is the Glu-55. The Zn(2+) site is built by Cys-83 and Cys-86.

Belongs to the cytidine and deoxycytidylate deaminase family. In terms of assembly, homodimer. It depends on Zn(2+) as a cofactor.

It catalyses the reaction adenosine(34) in tRNA + H2O + H(+) = inosine(34) in tRNA + NH4(+). Functionally, catalyzes the deamination of adenosine to inosine at the wobble position 34 of tRNA(Arg2). The protein is tRNA-specific adenosine deaminase of Staphylococcus aureus (strain Mu50 / ATCC 700699).